The following is a 391-amino-acid chain: Succinyl-diaminopimelate desuccinylase (391 aa).

Histidine 67 contacts Zn(2+). Aspartate 69 is an active-site residue. A Zn(2+)-binding site is contributed by aspartate 101. Residue glutamate 135 is the Proton acceptor of the active site. Residues glutamate 136, glutamate 164, and histidine 353 each contribute to the Zn(2+) site.

The protein belongs to the peptidase M20A family. DapE subfamily. In terms of assembly, homodimer. Zn(2+) is required as a cofactor. Co(2+) serves as cofactor.

It catalyses the reaction N-succinyl-(2S,6S)-2,6-diaminopimelate + H2O = (2S,6S)-2,6-diaminopimelate + succinate. Its pathway is amino-acid biosynthesis; L-lysine biosynthesis via DAP pathway; LL-2,6-diaminopimelate from (S)-tetrahydrodipicolinate (succinylase route): step 3/3. Its function is as follows. Catalyzes the hydrolysis of N-succinyl-L,L-diaminopimelic acid (SDAP), forming succinate and LL-2,6-diaminopimelate (DAP), an intermediate involved in the bacterial biosynthesis of lysine and meso-diaminopimelic acid, an essential component of bacterial cell walls. This is Succinyl-diaminopimelate desuccinylase from Rickettsia bellii (strain OSU 85-389).